The sequence spans 474 residues: Glycogen synthase (474 aa).

Lysine 15 is a binding site for ADP-alpha-D-glucose.

The protein belongs to the glycosyltransferase 1 family. Bacterial/plant glycogen synthase subfamily.

The catalysed reaction is [(1-&gt;4)-alpha-D-glucosyl](n) + ADP-alpha-D-glucose = [(1-&gt;4)-alpha-D-glucosyl](n+1) + ADP + H(+). Its pathway is glycan biosynthesis; glycogen biosynthesis. Its function is as follows. Synthesizes alpha-1,4-glucan chains using ADP-glucose. In Chlamydia muridarum (strain MoPn / Nigg), this protein is Glycogen synthase.